Here is a 91-residue protein sequence, read N- to C-terminus: RNA-binding protein Hfq (91 aa).

Residues 9–68 (DPFLNALRRERVPVSVYLVNGIKLQGTIESFDQFVVLLRNTVSQMVYKHAISTVVPARNV) form the Sm domain.

This sequence belongs to the Hfq family. Homohexamer.

Its function is as follows. RNA chaperone that binds small regulatory RNA (sRNAs) and mRNAs to facilitate mRNA translational regulation in response to envelope stress, environmental stress and changes in metabolite concentrations. Also binds with high specificity to tRNAs. This Stenotrophomonas maltophilia (strain K279a) protein is RNA-binding protein Hfq.